The following is a 302-amino-acid chain: Methionyl-tRNA formyltransferase (302 aa).

Position 109–112 (109–112 (SILP)) interacts with (6S)-5,6,7,8-tetrahydrofolate.

This sequence belongs to the Fmt family.

It carries out the reaction L-methionyl-tRNA(fMet) + (6R)-10-formyltetrahydrofolate = N-formyl-L-methionyl-tRNA(fMet) + (6S)-5,6,7,8-tetrahydrofolate + H(+). Its function is as follows. Attaches a formyl group to the free amino group of methionyl-tRNA(fMet). The formyl group appears to play a dual role in the initiator identity of N-formylmethionyl-tRNA by promoting its recognition by IF2 and preventing the misappropriation of this tRNA by the elongation apparatus. This chain is Methionyl-tRNA formyltransferase, found in Campylobacter hominis (strain ATCC BAA-381 / DSM 21671 / CCUG 45161 / LMG 19568 / NCTC 13146 / CH001A).